A 102-amino-acid chain; its full sequence is Large ribosomal subunit protein bL21 (102 aa).

This sequence belongs to the bacterial ribosomal protein bL21 family. Part of the 50S ribosomal subunit. Contacts protein L20.

In terms of biological role, this protein binds to 23S rRNA in the presence of protein L20. The chain is Large ribosomal subunit protein bL21 from Photorhabdus laumondii subsp. laumondii (strain DSM 15139 / CIP 105565 / TT01) (Photorhabdus luminescens subsp. laumondii).